The chain runs to 391 residues: Heme A synthase (391 aa).

The next 8 membrane-spanning stretches (helical) occupy residues 37 to 57 (IRLW…VGGL), 121 to 141 (RQLG…FLVA), 152 to 172 (LLAL…MVAS), 186 to 206 (LAVH…QALL), 229 to 249 (TTVL…VAGI), 298 to 318 (FLHR…WIFG), 332 to 352 (LLAL…LSAA), and 354 to 374 (WQVA…ILHA). His-300 is a heme binding site. Residue His-360 coordinates heme.

It belongs to the COX15/CtaA family. Type 2 subfamily. In terms of assembly, interacts with CtaB. It depends on heme b as a cofactor.

It localises to the cell membrane. It carries out the reaction Fe(II)-heme o + 2 A + H2O = Fe(II)-heme a + 2 AH2. It functions in the pathway porphyrin-containing compound metabolism; heme A biosynthesis; heme A from heme O: step 1/1. Functionally, catalyzes the conversion of heme O to heme A by two successive hydroxylations of the methyl group at C8. The first hydroxylation forms heme I, the second hydroxylation results in an unstable dihydroxymethyl group, which spontaneously dehydrates, resulting in the formyl group of heme A. This Cereibacter sphaeroides (strain ATCC 17025 / ATH 2.4.3) (Rhodobacter sphaeroides) protein is Heme A synthase.